The chain runs to 584 residues: MNNHIEALSYYLGAFVDELTLLNVCDVVISPGSRSTPIALLMEQHEGMNTYLHVDERSAGFFALGIAKAKKRPVALLCTSGTAAANYYPAVCEAFHSRVPLIVLTADRPHELRDVGAPQAMNQINLYGTFVKQFTEMALPEASEAMYHYARLTTQRMIASACLAPQGPVHLNFPVREPLIPDFSLESLWDKGRGEYTGVVQQGNAVMPSEYVDSLVGRLSHMEKGLIICGDDSHSEIAAFATQLAEKTGYPILADPLSNIRSGHHDKTMVIDCYDTFLRNELLKETWKPDVLIRFGGMPVSKALTQFIKKQTKAVHIVVDESGQWRDPALVATEVVQASDIAFCSALIEKMPVMKKNDWFRMWQHINEKTKETLREMETYDTAFEGRVITDIVRVLPEGATLFASNSMPIRDTDSFFFTSDKNIQVMANRGVNGIDGIISTALGASMICDPLVLVIGDLSFYHDLNGLLAAKLHELNITIVVVNNDGGGIFSFLPQYEKKEHFESLFGTPIGLDYEHVVTMYGGSFSRVNGWEQFREEVQKGVTTEGLHVVEICTNRDENLTLHRTLWAKTQDVITTSLQGESK.

This sequence belongs to the TPP enzyme family. MenD subfamily. Homodimer. Requires Mg(2+) as cofactor. Mn(2+) serves as cofactor. Thiamine diphosphate is required as a cofactor.

The enzyme catalyses isochorismate + 2-oxoglutarate + H(+) = 5-enolpyruvoyl-6-hydroxy-2-succinyl-cyclohex-3-ene-1-carboxylate + CO2. It participates in quinol/quinone metabolism; 1,4-dihydroxy-2-naphthoate biosynthesis; 1,4-dihydroxy-2-naphthoate from chorismate: step 2/7. The protein operates within quinol/quinone metabolism; menaquinone biosynthesis. Catalyzes the thiamine diphosphate-dependent decarboxylation of 2-oxoglutarate and the subsequent addition of the resulting succinic semialdehyde-thiamine pyrophosphate anion to isochorismate to yield 2-succinyl-5-enolpyruvyl-6-hydroxy-3-cyclohexene-1-carboxylate (SEPHCHC). The chain is 2-succinyl-5-enolpyruvyl-6-hydroxy-3-cyclohexene-1-carboxylate synthase from Bacillus anthracis.